A 338-amino-acid chain; its full sequence is Glyceraldehyde-3-phosphate dehydrogenase 2 (338 aa).

NAD(+)-binding positions include 11 to 12, Asp-33, and Arg-78; that span reads RI. D-glyceraldehyde 3-phosphate contacts are provided by residues 149 to 151, Thr-180, 209 to 210, and Arg-232; these read SCT and TG. The active-site Nucleophile is the Cys-150. Asn-314 is an NAD(+) binding site.

Belongs to the glyceraldehyde-3-phosphate dehydrogenase family. Homotetramer.

The protein resides in the cytoplasm. The enzyme catalyses D-glyceraldehyde 3-phosphate + phosphate + NAD(+) = (2R)-3-phospho-glyceroyl phosphate + NADH + H(+). It functions in the pathway carbohydrate degradation; glycolysis; pyruvate from D-glyceraldehyde 3-phosphate: step 1/5. This Agaricus bisporus (White button mushroom) protein is Glyceraldehyde-3-phosphate dehydrogenase 2 (gpd2).